The sequence spans 1122 residues: Protein phosphatase 1 regulatory subunit 3A (1122 aa).

Positions 32 to 58 (TFQPGFSPQPSRRGSDSSEDIYLDTPS) are disordered. A phosphoserine; by GSK3 mark is found at Ser38 and Ser42. Ser46 carries the post-translational modification Phosphoserine; by PKA and ISPK. Ser49 is subject to Phosphoserine. Residue Thr56 is modified to Phosphothreonine. Positions 62–65 (RRVS) match the PP1-binding motif motif. Phosphoserine; by PKA is present on Ser65. In terms of domain architecture, CBM21 spans 122-230 (QLQIQKAILE…NNNGTNYTFI (109 aa)). 4 disordered regions span residues 332-351 (STAS…NFPN), 395-422 (SSGD…LGDT), 496-516 (CLKE…NGKD), and 640-668 (GINS…SREN). 2 stretches are compositionally biased toward basic and acidic residues: residues 395-405 (SSGDDCTHQPS) and 499-516 (ESTE…NGKD). The segment covering 640 to 662 (GINSEDQDNSPQHKQSWNVLESQ) has biased composition (polar residues). Ser844 carries the post-translational modification Phosphoserine. The span at 963–977 (IEKHPYPESKPEEVS) shows a compositional bias: basic and acidic residues. 2 disordered regions span residues 963 to 983 (IEKH…SGIV) and 1025 to 1058 (RHEN…PVEE). 2 stretches are compositionally biased toward polar residues: residues 1031–1040 (LVSSGQSLYT) and 1048–1058 (SSASTSLPVEE). The helical transmembrane segment at 1078 to 1098 (YFLLFLIFLITVYHYDLMIGL) threads the bilayer.

Interacts with PPP1CC catalytic subunit of PP1, and associates with glycogen. Phosphorylation at Ser-46 by ISPK stimulates the dephosphorylation of glycogen synthase and phosphorylase kinase. As to expression, skeletal muscle and heart.

It localises to the membrane. Functionally, seems to act as a glycogen-targeting subunit for PP1. PP1 is essential for cell division, and participates in the regulation of glycogen metabolism, muscle contractility and protein synthesis. Plays an important role in glycogen synthesis but is not essential for insulin activation of glycogen synthase. The sequence is that of Protein phosphatase 1 regulatory subunit 3A (PPP1R3A) from Homo sapiens (Human).